The primary structure comprises 494 residues: Glutamyl-tRNA(Gln) amidotransferase subunit A (494 aa).

Catalysis depends on charge relay system residues Lys79 and Ser159. Residue Ser183 is the Acyl-ester intermediate of the active site.

This sequence belongs to the amidase family. GatA subfamily. In terms of assembly, heterotrimer of A, B and C subunits.

It carries out the reaction L-glutamyl-tRNA(Gln) + L-glutamine + ATP + H2O = L-glutaminyl-tRNA(Gln) + L-glutamate + ADP + phosphate + H(+). Allows the formation of correctly charged Gln-tRNA(Gln) through the transamidation of misacylated Glu-tRNA(Gln) in organisms which lack glutaminyl-tRNA synthetase. The reaction takes place in the presence of glutamine and ATP through an activated gamma-phospho-Glu-tRNA(Gln). This Bartonella tribocorum (strain CIP 105476 / IBS 506) protein is Glutamyl-tRNA(Gln) amidotransferase subunit A.